Here is a 523-residue protein sequence, read N- to C-terminus: ATP-dependent RNA helicase dbp8 (523 aa).

The tract at residues 1 to 52 (MAPPRPEETISEDLDESSGSSETEQPDIQTRAPKRRRLSASSDDSYVAPAPL) is disordered. The Q motif signature appears at 93-121 (SSFSALNVAPWLVGSLTTLAVRKPTAIQK). The region spanning 124-303 (IPEILNGKDC…NMPRAANKPP (180 aa)) is the Helicase ATP-binding domain. 137 to 144 (SRTGSGKT) contacts ATP. A DEAD box motif is present at residues 246–249 (DEAD). The 158-residue stretch at 335–492 (AFLHVLLSTE…GRVVRTGVLK (158 aa)) folds into the Helicase C-terminal domain.

The protein belongs to the DEAD box helicase family. DDX49/DBP8 subfamily.

It is found in the nucleus. Its subcellular location is the nucleolus. It catalyses the reaction ATP + H2O = ADP + phosphate + H(+). In terms of biological role, ATP-binding RNA helicase involved in 40S ribosomal subunit biogenesis and is required for the normal formation of 18S rRNAs through pre-rRNA processing at A0, A1 and A2 sites. Required for vegetative growth. The chain is ATP-dependent RNA helicase dbp8 (dbp8) from Aspergillus clavatus (strain ATCC 1007 / CBS 513.65 / DSM 816 / NCTC 3887 / NRRL 1 / QM 1276 / 107).